Here is a 476-residue protein sequence, read N- to C-terminus: Glutamyl-tRNA(Gln) amidotransferase subunit A (476 aa).

Active-site charge relay system residues include K69 and S144. The active-site Acyl-ester intermediate is the S168.

This sequence belongs to the amidase family. GatA subfamily. In terms of assembly, heterotrimer of A, B and C subunits.

It catalyses the reaction L-glutamyl-tRNA(Gln) + L-glutamine + ATP + H2O = L-glutaminyl-tRNA(Gln) + L-glutamate + ADP + phosphate + H(+). Its function is as follows. Allows the formation of correctly charged Gln-tRNA(Gln) through the transamidation of misacylated Glu-tRNA(Gln) in organisms which lack glutaminyl-tRNA synthetase. The reaction takes place in the presence of glutamine and ATP through an activated gamma-phospho-Glu-tRNA(Gln). The chain is Glutamyl-tRNA(Gln) amidotransferase subunit A from Sulfolobus acidocaldarius (strain ATCC 33909 / DSM 639 / JCM 8929 / NBRC 15157 / NCIMB 11770).